Consider the following 107-residue polypeptide: Thiosulfate sulfurtransferase GlpE (107 aa).

The Rhodanese domain occupies 19-107 (QDLNAVLVDI…WHKAGLPVEK (89 aa)). The Cysteine persulfide intermediate role is filled by Cys-67.

It belongs to the GlpE family.

The protein resides in the cytoplasm. It carries out the reaction thiosulfate + hydrogen cyanide = thiocyanate + sulfite + 2 H(+). It catalyses the reaction thiosulfate + [thioredoxin]-dithiol = [thioredoxin]-disulfide + hydrogen sulfide + sulfite + 2 H(+). Its function is as follows. Transferase that catalyzes the transfer of sulfur from thiosulfate to thiophilic acceptors such as cyanide or dithiols. May function in a CysM-independent thiosulfate assimilation pathway by catalyzing the conversion of thiosulfate to sulfite, which can then be used for L-cysteine biosynthesis. The chain is Thiosulfate sulfurtransferase GlpE from Aliivibrio fischeri (strain MJ11) (Vibrio fischeri).